We begin with the raw amino-acid sequence, 765 residues long: MAGFKRGYDGKIAGLYDLDKTLGRGHFAVVKLARHVFTGEKVAVKVIDKTKLDTLATGHLFQEVRCMKLVQHPNIVRLYEVIDTQTKLYLILELGDGGDMFDYIMKHEEGLNEDLAKKYFAQIVHAISYCHKLHVVHRDLKPENVVFFEKQGLVKLTDFGFSNKFQPGKKLTTSCGSLAYSAPEILLGDEYDAPAVDIWSLGVILFMLVCGQPPFQEANDSETLTMIMDCKYTVPSHVSKECKDLITRMLQRDPKRRASLEEIENHPWLQGVDPSPATKYNIPLVSYKNLSEEEHNSIIQRMVLGDIADRDAIVEALETNRYNHITATYFLLAERILREKQEKEIQTRSASPSNIKAQFRQSWPTKIDVPQDLEDDLTATPLSHATVPQSPARAADSVLNGHRSKGLCDSAKKDDLPELAGPALSTVPPASLKPTASGRKCLFRVEEDEEEDEEDKKPMSLSTQVVLRRKPSVTNRLTSRKSAPVLNQIFEEGESDDEFDMDENLPPKLSRLKMNIASPGTVHKRYHRRKSQGRGSSCSSSETSDDDSESRRRLDKDSGFTYSWHRRDSSEGPPGSEGDGGGQSKPSNASGGVDKASPSENNAGGGSPSSGSGGNPTNTSGTTRRCAGPSNSMQLASRSAGELVESLKLMSLCLGSQLHGSTKYIIDPQNGLSFSSVKVQEKSTWKMCISSTGNAGQVPAVGGIKFFSDHMADTTTELERIKSKNLKNNVLQLPLCEKTISVNIQRNPKEGLLCASSPASCCHVI.

The 254-residue stretch at 16 to 269 folds into the Protein kinase domain; sequence YDLDKTLGRG…LEEIENHPWL (254 aa). ATP is bound by residues 22–30 and K45; that span reads LGRGHFAVV. The active-site Proton acceptor is D139. A Phosphoserine modification is found at S162. A Phosphothreonine; by LKB1 modification is found at T173. The UBA domain maps to 291–334; the sequence is SEEEHNSIIQRMVLGDIADRDAIVEALETNRYNHITATYFLLAE. A phosphoserine mark is found at S362, S390, S482, S495, and S518. The disordered stretch occupies residues 512 to 634; the sequence is LKMNIASPGT…RCAGPSNSMQ (123 aa). Positions 522–532 are enriched in basic residues; it reads VHKRYHRRKSQ. Low complexity predominate over residues 533–542; it reads GRGSSCSSSE. R534 is modified (omega-N-methylarginine). Residues 549-558 show a composition bias toward basic and acidic residues; it reads ESRRRLDKDS. Over residues 603–614 the composition is skewed to gly residues; sequence AGGGSPSSGSGG. S607 carries the phosphoserine modification.

This sequence belongs to the protein kinase superfamily. CAMK Ser/Thr protein kinase family. It depends on Mg(2+) as a cofactor. Post-translationally, autophosphorylated. Phosphorylation on Thr-173 by STK11/LKB1 in complex with STE20-related adapter-alpha (STRADA) pseudo kinase and CAB39. As to expression, expressed in hematopoietic progenitor cells and leukemic cell lines. Weakly expressed in the testis.

The protein localises to the nucleus. The catalysed reaction is L-seryl-[protein] + ATP = O-phospho-L-seryl-[protein] + ADP + H(+). It catalyses the reaction L-threonyl-[protein] + ATP = O-phospho-L-threonyl-[protein] + ADP + H(+). With respect to regulation, activated by phosphorylation on Thr-173. Its function is as follows. May play a role in hematopoietic cell proliferation or differentiation. Potential mediator of neuronal apoptosis. The polypeptide is SNF-related serine/threonine-protein kinase (Homo sapiens (Human)).